We begin with the raw amino-acid sequence, 225 residues long: MNSIEFPLLDRTTPISVISTTSNDLSNWSRLSSLWPLLYGTSCCFIEFASLIGSRFDFDRYGLVPRSSPRQADLILTAGTVTMKMAPSLVRLYEQMPEQKYVIAMGACTITGGMFSTDSYSTVRGVDKLIPVDVYLPGCPPKPEAIIDAITKLRKKISREIYEDRIRSQQGNRCFTTNHKFHIGRTTNTGNYDQGLLYQPPSTSKIAPEAFFKYKKSVSSSELVN.

Residues Cys-43, Cys-44, Cys-108, and Cys-139 each coordinate [4Fe-4S] cluster.

It belongs to the complex I 20 kDa subunit family. In terms of assembly, NDH is composed of at least 16 different subunits, 5 of which are encoded in the nucleus. [4Fe-4S] cluster is required as a cofactor.

It localises to the plastid. Its subcellular location is the chloroplast thylakoid membrane. The catalysed reaction is a plastoquinone + NADH + (n+1) H(+)(in) = a plastoquinol + NAD(+) + n H(+)(out). It carries out the reaction a plastoquinone + NADPH + (n+1) H(+)(in) = a plastoquinol + NADP(+) + n H(+)(out). NDH shuttles electrons from NAD(P)H:plastoquinone, via FMN and iron-sulfur (Fe-S) centers, to quinones in the photosynthetic chain and possibly in a chloroplast respiratory chain. The immediate electron acceptor for the enzyme in this species is believed to be plastoquinone. Couples the redox reaction to proton translocation, and thus conserves the redox energy in a proton gradient. The polypeptide is NAD(P)H-quinone oxidoreductase subunit K, chloroplastic (Populus alba (White poplar)).